Consider the following 350-residue polypeptide: Chemokine C-C motif receptor-like 2 (350 aa).

Residues 1 to 43 are Extracellular-facing; sequence MANYTSAPEDDYDVFIEDDLSNDERELCSPYDPQALLAQLVPY. Asn-3 carries N-linked (GlcNAc...) asparagine glycosylation. A helical membrane pass occupies residues 44–64; the sequence is LFITVFLVGLLDNILVVLIMV. The Cytoplasmic portion of the chain corresponds to 65 to 74; sequence KYKGLKQVEN. A helical membrane pass occupies residues 75–95; sequence IYLLNLAVCNLCFLCTLPFWV. Residues 96 to 110 lie on the Extracellular side of the membrane; that stretch reads HMAWHEGDPGEPLCK. Cysteines 109 and 187 form a disulfide. The helical transmembrane segment at 111-131 threads the bilayer; it reads ILLVLYSVGLFSEAFFNVLLT. At 132–149 the chain is on the cytoplasmic side; sequence VQRYQKFFQMRGFFSATR. A helical transmembrane segment spans residues 150 to 170; sequence MVAGSIFPSALVWVIAVLVML. Over 171–204 the chain is Extracellular; that stretch reads PELAFYKPQMENQKYKCFFGRPLFLPADETFWKH. Residues 205-225 form a helical membrane-spanning segment; sequence FLTLKMNILGFLLPLFVFVFC. Residues 226 to 244 lie on the Cytoplasmic side of the membrane; the sequence is YVRMRRTLKFGERGYDLFK. The chain crosses the membrane as a helical span at residues 245-265; that stretch reads LVFTIMVVFLLMWGPYNIALF. Residues 266–288 are Extracellular-facing; that stretch reads LSAFNEHFSLHGCESSHNLDRST. The chain crosses the membrane as a helical span at residues 289 to 309; it reads LITKIIATTHCCVNPLLYVFF. Topologically, residues 310 to 350 are cytoplasmic; it reads DEAFRKHLYHFCHLCNDTAPQPTEEPAQGTSREEPCLSTKM. Residues 329 to 350 form a disordered region; it reads PQPTEEPAQGTSREEPCLSTKM.

It belongs to the G-protein coupled receptor 1 family.

The protein localises to the cell membrane. Functionally, receptor for CCL19 and chemerin/RARRES2. Does not appear to be a signaling receptor, but may have a role in modulating chemokine-triggered immune responses by capturing and internalizing CCL19 or by presenting RARRES2 ligand to CMKLR1, a functional signaling receptor. Plays a critical role for the development of Th2 responses. The polypeptide is Chemokine C-C motif receptor-like 2 (CCRL2) (Sus scrofa (Pig)).